Reading from the N-terminus, the 313-residue chain is MSLASGPGPGWLLFSFGMGLVSGSKCPNNCLCQAQEVICTGKQLTEYPLDIPLNTRRLFLNENRITSLPAMHLGLLSDLVYLDCQNNRIREVMDYTFIGVFKLIYLDLSSNNLTSISPFTFSVLSNLVQLNIANNPHLLSLHKFTFANTTSLRYLDLRNTGLQTLDSAALYHLTTLETLFLSGNPWKCNCSFLDFAIFLIVFHMDPSDDLNATCVEPTELTGWPITRVGNPLRYMCITHLDHKDYIFLLLIGFCIFAAGTVAAWLTGVCAVLYQNTRHKSSEEDEDEAGTRVEVSRRIFQTQTSSVQEFPQLI.

Residues 1-23 (MSLASGPGPGWLLFSFGMGLVSG) form the signal peptide. The region spanning 24 to 53 (SKCPNNCLCQAQEVICTGKQLTEYPLDIPL) is the LRRNT domain. Over 24–244 (SKCPNNCLCQ…MCITHLDHKD (221 aa)) the chain is Extracellular. Disulfide bonds link C26/C32 and C30/C39. LRR repeat units follow at residues 54 to 75 (NTRR…HLGL), 78 to 99 (DLVY…TFIG), 102 to 123 (KLIY…TFSV), 126 to 148 (NLVQ…TFAN), and 151 to 172 (SLRY…ALYH). N112 and N148 each carry an N-linked (GlcNAc...) asparagine glycan. Residues 184–238 (NPWKCNCSFLDFAIFLIVFHMDPSDDLNATCVEPTELTGWPITRVGNPLRYMCIT) enclose the LRRCT domain. Disulfide bonds link C188–C214 and C190–C236. Residues N189 and N211 are each glycosylated (N-linked (GlcNAc...) asparagine). Residues 245 to 265 (YIFLLLIGFCIFAAGTVAAWL) traverse the membrane as a helical segment. Topologically, residues 266–313 (TGVCAVLYQNTRHKSSEEDEDEAGTRVEVSRRIFQTQTSSVQEFPQLI) are cytoplasmic.

As to quaternary structure, may interact with KCNU1; this interaction may be required for LRRC52 stability and may change the channel gating properties. Interacts with KCNMA1. N-glycosylated. In terms of tissue distribution, mainly expressed in testis and skeletal muscle.

It is found in the cell membrane. In terms of biological role, auxiliary protein of the large-conductance, voltage and calcium-activated potassium channel (BK alpha). Modulates gating properties by producing a marked shift in the BK channel's voltage dependence of activation in the hyperpolarizing direction, and in the absence of calcium. KCNU1 channel auxiliary protein. Modulates KCNU1 gating properties. This Homo sapiens (Human) protein is Leucine-rich repeat-containing protein 52 (LRRC52).